The primary structure comprises 131 residues: Small ribosomal subunit protein uS11 (131 aa).

This sequence belongs to the universal ribosomal protein uS11 family. Part of the 30S ribosomal subunit. Interacts with proteins S7 and S18. Binds to IF-3.

Located on the platform of the 30S subunit, it bridges several disparate RNA helices of the 16S rRNA. Forms part of the Shine-Dalgarno cleft in the 70S ribosome. This is Small ribosomal subunit protein uS11 from Endomicrobium trichonymphae.